The chain runs to 353 residues: S-adenosylmethionine:tRNA ribosyltransferase-isomerase (353 aa).

The protein belongs to the QueA family. As to quaternary structure, monomer.

The protein resides in the cytoplasm. It catalyses the reaction 7-aminomethyl-7-carbaguanosine(34) in tRNA + S-adenosyl-L-methionine = epoxyqueuosine(34) in tRNA + adenine + L-methionine + 2 H(+). Its pathway is tRNA modification; tRNA-queuosine biosynthesis. In terms of biological role, transfers and isomerizes the ribose moiety from AdoMet to the 7-aminomethyl group of 7-deazaguanine (preQ1-tRNA) to give epoxyqueuosine (oQ-tRNA). In Rickettsia bellii (strain OSU 85-389), this protein is S-adenosylmethionine:tRNA ribosyltransferase-isomerase.